Consider the following 461-residue polypeptide: MLEFLSQQKPKILIIGDFMVDNYTWCDCSRISPEAPVLVAKTLKEDKRLGGAANVYANLKSLGADVFALGVVGDDESGKFLQENLKGEFLIQKGRKTPFKNRIMAHNQQVLRLDEEDTSEILLENELIALFDEKIKDFKAVVLSDYAKGILTPKVCKALIKKAKALNIPVLVDPKGSDFSKYSGATLLTPNKKEALEALKFENLEGENLEKGIKKLKEDFALRYSIITLSEAGIALFDKSLKIAPAKALEVYDVTGAGDSVIAVLAFCLANGVEIFKACELANEAAAVVVGKIGSVSVSFDEIKSFNRVDFEKKIKSKEELLTLLKQKDKKIVFTNGCFDIVHFGHIKYLEKAKRLGDVLIVGLNSDASVKKLKGESRPVNSEFQRACMLAAFYFVDFVVIFDEDTPLELISFLKPDILVKGADYKDKIVVGADIVSKVELIDFEEGFSTSKIIEKIKDKK.

Residues 1–312 (MLEFLSQQKP…IKSFNRVDFE (312 aa)) are ribokinase. ATP is bound at residue 191-194 (NKKE). Asp-259 is a catalytic residue. The segment at 334–461 (FTNGCFDIVH…KIIEKIKDKK (128 aa)) is cytidylyltransferase.

This sequence in the N-terminal section; belongs to the carbohydrate kinase PfkB family. The protein in the C-terminal section; belongs to the cytidylyltransferase family. In terms of assembly, homodimer.

It catalyses the reaction D-glycero-beta-D-manno-heptose 7-phosphate + ATP = D-glycero-beta-D-manno-heptose 1,7-bisphosphate + ADP + H(+). The enzyme catalyses D-glycero-beta-D-manno-heptose 1-phosphate + ATP + H(+) = ADP-D-glycero-beta-D-manno-heptose + diphosphate. The protein operates within nucleotide-sugar biosynthesis; ADP-L-glycero-beta-D-manno-heptose biosynthesis; ADP-L-glycero-beta-D-manno-heptose from D-glycero-beta-D-manno-heptose 7-phosphate: step 1/4. Its pathway is nucleotide-sugar biosynthesis; ADP-L-glycero-beta-D-manno-heptose biosynthesis; ADP-L-glycero-beta-D-manno-heptose from D-glycero-beta-D-manno-heptose 7-phosphate: step 3/4. Catalyzes the phosphorylation of D-glycero-D-manno-heptose 7-phosphate at the C-1 position to selectively form D-glycero-beta-D-manno-heptose-1,7-bisphosphate. Its function is as follows. Catalyzes the ADP transfer from ATP to D-glycero-beta-D-manno-heptose 1-phosphate, yielding ADP-D-glycero-beta-D-manno-heptose. The polypeptide is Bifunctional protein HldE (Campylobacter jejuni subsp. doylei (strain ATCC BAA-1458 / RM4099 / 269.97)).